The following is a 570-amino-acid chain: Double-stranded RNA-binding protein Staufen homolog 2 (570 aa).

The region spanning 8–75 (TPVCLVNELA…ANKALTESTL (68 aa)) is the DRBM 1 domain. 2 disordered regions span residues 71–94 (TEST…PGSI) and 178–203 (ALQN…DDKD). Positions 83 to 94 (PKSNVNNNPGSI) are enriched in polar residues. Positions 95–181 (TPTVELNGLA…AMKALQALQN (87 aa)) constitute a DRBM 2 domain. S188 bears the Phosphoserine mark. Basic and acidic residues predominate over residues 194–203 (SGKEMDDDKD). 2 DRBM domains span residues 207 to 274 (SEIS…ELKK) and 307 to 375 (NPIS…QLGY). 2 consecutive short sequence motifs (nuclear localization signal) follow at residues 273–291 (KKLP…FKKR) and 373–412 (LGYK…PKGI). The disordered stretch occupies residues 381–413 (LQDPLDKTGENKGWSGPKPGFPEPTNNTPKGIL). The segment at 381 to 570 (LQDPLDKTGE…QDCKKSKSAI (190 aa)) is required for dendritic transport. Position 395 is a phosphoserine (S395). T405 is modified (phosphothreonine). S416, S426, S440, S455, and S492 each carry phosphoserine. A disordered region spans residues 545–570 (LREKADNNQAKPASISQDCKKSKSAI). The segment covering 551–561 (NNQAKPASISQ) has biased composition (polar residues).

As to quaternary structure, interacts with microtubules. Isoform 2 and isoform 3 may also interact with ribosomes, and this association is independent of translation. Identified in a mRNP complex, at least composed of DHX9, DDX3X, ELAVL1, HNRNPU, IGF2BP1, ILF3, PABPC1, PCBP2, PTBP2, STAU1, STAU2, SYNCRIP and YBX1. Interacts with the exportin XPO5. This requires RNA and RAN bound to GTP. Interacts with TRIM71 (via NHL repeats) in an RNA-dependent manner. As to expression, expressed in brain and neurons, where isoform 2 and isoform 3 appear to be the most abundant. Expressed at the neuromuscular junction of the extensor digitorum longus, tibialis anterior and soleus muscles. Expression at neuromuscular junctions is most pronounced in slow-twitch muscle. Also weakly expressed in heart, kidney, ovary and testis.

It is found in the cytoplasm. The protein localises to the nucleus. It localises to the nucleolus. Its subcellular location is the endoplasmic reticulum. RNA-binding protein required for the microtubule-dependent transport of neuronal RNA from the cell body to the dendrite. As protein synthesis occurs within the dendrite, the localization of specific mRNAs to dendrites may be a prerequisite for neurite outgrowth and plasticity at sites distant from the cell body. The protein is Double-stranded RNA-binding protein Staufen homolog 2 (Stau2) of Mus musculus (Mouse).